The primary structure comprises 330 residues: Phosphate acyltransferase (330 aa).

This sequence belongs to the PlsX family. In terms of assembly, homodimer. Probably interacts with PlsY.

The protein localises to the cytoplasm. It carries out the reaction a fatty acyl-[ACP] + phosphate = an acyl phosphate + holo-[ACP]. It participates in lipid metabolism; phospholipid metabolism. Functionally, catalyzes the reversible formation of acyl-phosphate (acyl-PO(4)) from acyl-[acyl-carrier-protein] (acyl-ACP). This enzyme utilizes acyl-ACP as fatty acyl donor, but not acyl-CoA. This Lactobacillus delbrueckii subsp. bulgaricus (strain ATCC 11842 / DSM 20081 / BCRC 10696 / JCM 1002 / NBRC 13953 / NCIMB 11778 / NCTC 12712 / WDCM 00102 / Lb 14) protein is Phosphate acyltransferase.